Here is a 727-residue protein sequence, read N- to C-terminus: Pre-B-cell leukemia transcription factor-interacting protein 1 (727 aa).

Residues 1–10 (MASCPDSDNS) are compositionally biased toward polar residues. The disordered stretch occupies residues 1–169 (MASCPDSDNS…GREPSSSQPV (169 aa)). Phosphoserine occurs at positions 131, 142, 143, and 144. Thr-148 carries the post-translational modification Phosphothreonine. Ser-164 bears the Phosphoserine mark. 2 coiled-coil regions span residues 270–350 (FLLD…RGVD) and 377–405 (DPSL…WQLL). The segment covering 446 to 456 (QGINTGRSPND) has biased composition (polar residues). Disordered regions lie at residues 446–565 (QGIN…NSPD) and 694–727 (LKKR…YHQG). Residues 473 to 563 (WGGKEKWRGG…QKHSWGKDNS (91 aa)) are compositionally biased toward basic and acidic residues. The Nuclear localization signal signature appears at 486 to 506 (QKAEHWKPRKEESGQERQRSW). At Ser-563 the chain carries Phosphoserine. Residues 691–716 (DKALKKRSRKKEKHSWNPRVVGPREE) carry the Nuclear localization signal motif. Basic residues predominate over residues 694–703 (LKKRSRKKEK).

In terms of assembly, interacts with ESR1, PBX1, PBX2 and PBX3. Interacts with TEX11.

It is found in the cytoplasm. The protein localises to the cytoskeleton. Its subcellular location is the nucleus. Functionally, regulator of pre-B-cell leukemia transcription factors (BPXs) function. Inhibits the binding of PBX1-HOX complex to DNA and blocks the transcriptional activity of E2A-PBX1. Tethers estrogen receptor-alpha (ESR1) to microtubules and allows them to influence estrogen receptors-alpha signaling. The polypeptide is Pre-B-cell leukemia transcription factor-interacting protein 1 (Pbxip1) (Mus musculus (Mouse)).